The chain runs to 252 residues: Phosphoribosylaminoimidazole-succinocarboxamide synthase 1 (252 aa).

It belongs to the SAICAR synthetase family.

It carries out the reaction 5-amino-1-(5-phospho-D-ribosyl)imidazole-4-carboxylate + L-aspartate + ATP = (2S)-2-[5-amino-1-(5-phospho-beta-D-ribosyl)imidazole-4-carboxamido]succinate + ADP + phosphate + 2 H(+). It functions in the pathway purine metabolism; IMP biosynthesis via de novo pathway; 5-amino-1-(5-phospho-D-ribosyl)imidazole-4-carboxamide from 5-amino-1-(5-phospho-D-ribosyl)imidazole-4-carboxylate: step 1/2. In Caulobacter vibrioides (strain ATCC 19089 / CIP 103742 / CB 15) (Caulobacter crescentus), this protein is Phosphoribosylaminoimidazole-succinocarboxamide synthase 1 (purC1).